Here is a 50-residue protein sequence, read N- to C-terminus: Insulin (50 aa).

3 cysteine pairs are disulfide-bonded: C7–C36, C19–C49, and C35–C40.

This sequence belongs to the insulin family. Heterodimer of a B chain and an A chain linked by two disulfide bonds.

Its subcellular location is the secreted. Functionally, insulin decreases blood glucose concentration. It increases cell permeability to monosaccharides, amino acids and fatty acids. It accelerates glycolysis, the pentose phosphate cycle, and glycogen synthesis in liver. This is Insulin (INS) from Proechimys guairae (Guaira spiny rat).